The chain runs to 154 residues: Deoxyuridine 5'-triphosphate nucleotidohydrolase (154 aa).

Substrate-binding positions include 64–66, asparagine 77, 81–83, and lysine 91; these read RSG and TID.

The protein belongs to the dUTPase family. In terms of assembly, homotrimer. Mg(2+) is required as a cofactor.

It catalyses the reaction dUTP + H2O = dUMP + diphosphate + H(+). It functions in the pathway pyrimidine metabolism; dUMP biosynthesis; dUMP from dCTP (dUTP route): step 2/2. Its function is as follows. This enzyme is involved in nucleotide metabolism: it produces dUMP, the immediate precursor of thymidine nucleotides and it decreases the intracellular concentration of dUTP so that uracil cannot be incorporated into DNA. The polypeptide is Deoxyuridine 5'-triphosphate nucleotidohydrolase (Mycobacterium marinum (strain ATCC BAA-535 / M)).